Here is a 405-residue protein sequence, read N- to C-terminus: Ubiquitin-like modifier-activating enzyme 5 (405 aa).

The interval 1–44 (MATVEELQTRVKQLEEELERERTRNRGGTDGGGGRKKIDQMSSE) is disordered. Over residues 7 to 24 (LQTRVKQLEEELERERTR) the composition is skewed to basic and acidic residues. ATP contacts are provided by glycine 81, aspartate 102, lysine 125, asparagine 148, and asparagine 182. Residues cysteine 224 and cysteine 227 each coordinate Zn(2+). Cysteine 248 (glycyl thioester intermediate) is an active-site residue. Zn(2+)-binding residues include cysteine 301 and cysteine 306. The linker stretch occupies residues 346–377 (AETTEEELKAASHGHVPELVEGVHVAYVRPMT). The short motif at 390 to 405 (DDQESLEDLMAKMKSI) is the UFC1-binding sequence (UFC) element.

It belongs to the ubiquitin-activating E1 family. UBA5 subfamily. In terms of assembly, homodimer; homodimerization is required for UFM1 activation. Interacts (via UIS motif) with UFM1; binds UFM1 via a trans-binding mechanism in which UFM1 interacts with distinct sites in both subunits of the UBA5 homodimer. Interacts (via C-terminus) with UFC1.

It localises to the cytoplasm. Its subcellular location is the nucleus. The protein resides in the endoplasmic reticulum membrane. The protein localises to the golgi apparatus. E1-like enzyme which specifically catalyzes the first step in ufmylation. Activates UFM1 by first adenylating its C-terminal glycine residue with ATP, and thereafter linking this residue to the side chain of a cysteine residue in E1, yielding a UFM1-E1 thioester and free AMP. Activates UFM1 via a trans-binding mechanism, in which UFM1 interacts with distinct sites in both subunits of the UBA5 homodimer. Trans-binding also promotes stabilization of the UBA5 homodimer, and enhances ATP-binding. Transfer of UFM1 from UBA5 to the E2-like enzyme UFC1 also takes place using a trans mechanism. In Branchiostoma floridae (Florida lancelet), this protein is Ubiquitin-like modifier-activating enzyme 5.